The primary structure comprises 594 residues: Potassium-transporting ATPase potassium-binding subunit (594 aa).

A run of 10 helical transmembrane segments spans residues 3-23 (ADFLGLLLLYLAILLCAAPLL), 67-87 (AVAMLVFNVLGVLAVYALQRL), 136-156 (ALTVQNFVSAATGIAVLIALV), 179-199 (LYVLLPLSFILALALVSQGVV), 287-307 (LEMLAILLIPAALCWTFGEMV), 314-334 (VAILAAMTVLFAGFSASAAYF), 415-435 (GLYGMLAFAILAVFIAGLMIG), 453-473 (VALVILATPALVLAGTAVAVL), 519-539 (VLLGLAMWFGRYTIIVAILAL), and 562-582 (LFVALLVGAVLLVGALTYVPA).

This sequence belongs to the KdpA family. As to quaternary structure, the system is composed of three essential subunits: KdpA, KdpB and KdpC.

The protein resides in the cell inner membrane. Functionally, part of the high-affinity ATP-driven potassium transport (or Kdp) system, which catalyzes the hydrolysis of ATP coupled with the electrogenic transport of potassium into the cytoplasm. This subunit binds the periplasmic potassium ions and delivers the ions to the membrane domain of KdpB through an intramembrane tunnel. In Bordetella bronchiseptica (strain ATCC BAA-588 / NCTC 13252 / RB50) (Alcaligenes bronchisepticus), this protein is Potassium-transporting ATPase potassium-binding subunit.